Reading from the N-terminus, the 306-residue chain is Dihydroorotate dehydrogenase B (NAD(+)), catalytic subunit (306 aa).

FMN is bound by residues Ser23 and 47 to 48 (KS). Residues Lys47, 71-75 (NAMGL), and Asn130 contribute to the substrate site. Asn130 provides a ligand contact to FMN. Cys133 acts as the Nucleophile in catalysis. FMN is bound by residues Lys168 and Ile194. 195–196 (NT) contacts substrate. Residues Gly220, 246–247 (GG), and 268–269 (GS) contribute to the FMN site.

This sequence belongs to the dihydroorotate dehydrogenase family. Type 1 subfamily. As to quaternary structure, heterotetramer of 2 PyrK and 2 PyrD type B subunits. It depends on FMN as a cofactor.

The protein localises to the cytoplasm. It carries out the reaction (S)-dihydroorotate + NAD(+) = orotate + NADH + H(+). Its pathway is pyrimidine metabolism; UMP biosynthesis via de novo pathway; orotate from (S)-dihydroorotate (NAD(+) route): step 1/1. Functionally, catalyzes the conversion of dihydroorotate to orotate with NAD(+) as electron acceptor. The sequence is that of Dihydroorotate dehydrogenase B (NAD(+)), catalytic subunit (pyrD) from Methanocaldococcus jannaschii (strain ATCC 43067 / DSM 2661 / JAL-1 / JCM 10045 / NBRC 100440) (Methanococcus jannaschii).